Here is a 532-residue protein sequence, read N- to C-terminus: E3 ubiquitin-protein ligase rnf8-B (532 aa).

Positions 30-84 constitute an FHA domain; sequence VTMGRGLGVTYQLKPTLCPLMISRTHCLFKQNARDEWTVTDNKSLNGVWRNKERL. The segment at 127 to 209 is disordered; it reads SLIRPLPGKT…VETDTVSPTQ (83 aa). A compositionally biased stretch (basic and acidic residues) spans 169 to 178; sequence VSRDGEDSAK. An RING-type zinc finger spans residues 377-415; it reads CIICSEHFIEAVTLNCAHSFCSYCIKSWRKRKEECPICR.

The protein belongs to the RNF8 family. In terms of assembly, homodimer. Forms a E2-E3 ubiquitin ligase complex composed of the rnf8 homodimer and a E2 heterodimer of ube2n and ube2v2.

The protein resides in the nucleus. It carries out the reaction S-ubiquitinyl-[E2 ubiquitin-conjugating enzyme]-L-cysteine + [acceptor protein]-L-lysine = [E2 ubiquitin-conjugating enzyme]-L-cysteine + N(6)-ubiquitinyl-[acceptor protein]-L-lysine.. Its pathway is protein modification; protein ubiquitination. Its function is as follows. E3 ubiquitin-protein ligase that plays a key role in DNA damage signaling via 2 distinct roles: by mediating the 'Lys-63'-linked ubiquitination of histones H2A and H2AX and promoting the recruitment of DNA repair proteins at double-strand breaks (DSBs) sites, and by catalyzing 'Lys-48'-linked ubiquitination to remove target proteins from DNA damage sites. Following DNA DSBs, it is recruited to the sites of damage by ATM-phosphorylated mdc1 and catalyzes the 'Lys-63'-linked ubiquitination of histones H2A and H2AX, thereby promoting the formation of tp53bp1 and brca1 ionizing radiation-induced foci (IRIF). H2A ubiquitination also mediates the ATM-dependent transcriptional silencing at regions flanking DSBs in cis, a mechanism to avoid collision between transcription and repair intermediates. Also catalyzes the formation of 'Lys-48'-linked polyubiquitin chains, leading to degradation of substrate proteins. In addition to its function in damage signaling, also plays a role in higher-order chromatin structure by mediating extensive chromatin decondensation. The chain is E3 ubiquitin-protein ligase rnf8-B from Xenopus laevis (African clawed frog).